The primary structure comprises 707 residues: Anaerobic ribonucleoside-triphosphate reductase (707 aa).

The region spanning 4–95 (FGVIKRDGSR…EYRHDRDLAR (92 aa)) is the ATP-cone domain. The Glycine radical domain maps to 584 to 707 (KKVNPYDKLD…EEVKRRVKHL (124 aa)). 4 residues coordinate Zn(2+): Cys645, Cys648, Cys663, and Cys666. At Gly682 the chain carries Glycine radical.

Belongs to the anaerobic ribonucleoside-triphosphate reductase family. As to quaternary structure, forms a tetramer composed of two NrdD and two NrdG subunits.

It carries out the reaction a ribonucleoside 5'-triphosphate + formate + H(+) = a 2'-deoxyribonucleoside 5'-triphosphate + CO2 + H2O. Its activity is regulated as follows. Activated under anaerobic conditions by NrdG, a tightly associated activase. Activation involves the formation of a glycyl radical at Gly-682. Catalyzes the conversion of ribonucleotides into deoxyribonucleotides, which are required for DNA synthesis and repair. This Haemophilus influenzae (strain ATCC 51907 / DSM 11121 / KW20 / Rd) protein is Anaerobic ribonucleoside-triphosphate reductase (nrdD).